The following is a 210-amino-acid chain: Na(+)-translocating NADH-quinone reductase subunit D (210 aa).

Helical transmembrane passes span 42–62 (FVMTLAVTFVTALSNFSVSLI), 72–92 (IIVQMAIIASLVIVVDQVLKA), 103–123 (VFVGLIITNCIVMGRAEAFAM), 131–151 (LIDGIGNGLGYGFVLITVGFF), and 178–198 (NGLMLLAPSAFFLIGFLIWVI).

This sequence belongs to the NqrDE/RnfAE family. In terms of assembly, composed of six subunits; NqrA, NqrB, NqrC, NqrD, NqrE and NqrF.

Its subcellular location is the cell inner membrane. The enzyme catalyses a ubiquinone + n Na(+)(in) + NADH + H(+) = a ubiquinol + n Na(+)(out) + NAD(+). Its function is as follows. NQR complex catalyzes the reduction of ubiquinone-1 to ubiquinol by two successive reactions, coupled with the transport of Na(+) ions from the cytoplasm to the periplasm. NqrA to NqrE are probably involved in the second step, the conversion of ubisemiquinone to ubiquinol. The sequence is that of Na(+)-translocating NADH-quinone reductase subunit D from Vibrio campbellii (strain ATCC BAA-1116).